We begin with the raw amino-acid sequence, 258 residues long: MLAKRIIPCLDVRDGQVVKGVQFRNHEIIGDIVPLAKRYAEEGADELVFYDITASSDGRVVDKSWVSRVAEVIDIPFCVAGGIKSLEDAAKILSFGADKISINSPALADPTLITRLADRFGVQCIVVGIDTWYDGETGKYHVNQYTGDESRTRVTQWETLDWVQEVQKRGAGEIVLNMMNQDGVRNGYDLEQLKKVREVCHVPLIASGGAGTMEHFLEAFRDADVDGALAASVFHKQIINIGELKAYLATQGVEIRIC.

Catalysis depends on residues aspartate 11 and aspartate 130.

The protein belongs to the HisA/HisF family. In terms of assembly, heterodimer of HisH and HisF.

The protein resides in the cytoplasm. The enzyme catalyses 5-[(5-phospho-1-deoxy-D-ribulos-1-ylimino)methylamino]-1-(5-phospho-beta-D-ribosyl)imidazole-4-carboxamide + L-glutamine = D-erythro-1-(imidazol-4-yl)glycerol 3-phosphate + 5-amino-1-(5-phospho-beta-D-ribosyl)imidazole-4-carboxamide + L-glutamate + H(+). It functions in the pathway amino-acid biosynthesis; L-histidine biosynthesis; L-histidine from 5-phospho-alpha-D-ribose 1-diphosphate: step 5/9. IGPS catalyzes the conversion of PRFAR and glutamine to IGP, AICAR and glutamate. The HisF subunit catalyzes the cyclization activity that produces IGP and AICAR from PRFAR using the ammonia provided by the HisH subunit. This Shigella sonnei (strain Ss046) protein is Imidazole glycerol phosphate synthase subunit HisF.